We begin with the raw amino-acid sequence, 241 residues long: MTASADIRLSDVRFSYGETAMHFDVTITGGEIAAIVGPSGSGKSTFLNLIAGFETPQSGIISINGVDVTHLPLADRPVSMVFQENNLFAHLTVEQNVDLGRSPNLRLNEEDRKAVASALARVGLQGKEKRKPEALSGGERQRVAIARVLVRERPVLLLDEAFASLGPALRHQMLDLVNKLRRETGMTVLMVTHTPEDALHLDALLIFLDNGKIAAQGPATEMLSRAGPEALRHYIGEMRSF.

The ABC transporter domain maps to 7–235; the sequence is IRLSDVRFSY…AGPEALRHYI (229 aa). Position 37–44 (37–44) interacts with ATP; sequence GPSGSGKS.

The protein belongs to the ABC transporter superfamily. Thiamine importer (TC 3.A.1.19.1) family. The complex is composed of two ATP-binding proteins (ThiQ), two transmembrane proteins (ThiP) and a solute-binding protein (ThiB).

Its subcellular location is the cell inner membrane. It carries out the reaction thiamine(out) + ATP + H2O = thiamine(in) + ADP + phosphate + H(+). Its function is as follows. Part of the ABC transporter complex ThiBPQ involved in thiamine import. Responsible for energy coupling to the transport system. The protein is Thiamine import ATP-binding protein ThiQ of Brucella abortus biovar 1 (strain 9-941).